The sequence spans 86 residues: Probable weak neurotoxin NNAM3 (86 aa).

The signal sequence occupies residues 1–21 (MKTLLLTLVVVTIVCLDLGYT). Cystine bridges form between Cys-24/Cys-45, Cys-27/Cys-32, Cys-38/Cys-63, Cys-67/Cys-78, and Cys-79/Cys-84.

It belongs to the three-finger toxin family. Ancestral subfamily. Orphan group II sub-subfamily. As to expression, expressed by the venom gland.

It is found in the secreted. Binds with low affinity to muscular (alpha-1-beta-1-delta-epsilon/CHRNA1-CHRNB1-CHRND-CHRNE) and very low affinity to neuronal (alpha-7/CHRNA7) nicotinic acetylcholine receptor (nAChR). The chain is Probable weak neurotoxin NNAM3 from Naja atra (Chinese cobra).